A 317-amino-acid chain; its full sequence is Olfactory receptor 1082 (317 aa).

The Extracellular portion of the chain corresponds to 1-26; it reads MESGNSTRRFSSFFLLGFTENPQLHF. An N-linked (GlcNAc...) asparagine glycan is attached at N5. Residues 27–51 form a helical membrane-spanning segment; sequence LIFALFLSMYLVTVLGNLLIIMAII. Residues 52 to 58 are Cytoplasmic-facing; sequence TQSHLHT. Residues 59–80 traverse the membrane as a helical segment; the sequence is PMYFFLANLSFVDICFTSTTIP. The Extracellular segment spans residues 81–101; that stretch reads KMLVNIYTQSKSITYEDCISQ. A disulfide bond links C98 and C190. Residues 102 to 121 form a helical membrane-spanning segment; the sequence is MCVFLVFAELGNFLLAVMAY. Topologically, residues 122–140 are cytoplasmic; sequence DRYVAXCHPLCYTVIVNHR. Residues 141 to 159 form a helical membrane-spanning segment; the sequence is LCILLLLLSWVISIFHAFI. Over 160–197 the chain is Extracellular; it reads QSLIVLQLTFCGDVKIPHFFCELNQLSQLTCSDNFPSH. The chain crosses the membrane as a helical span at residues 198–220; the sequence is LIMNLVPVMLAAISFSGILYSYF. Over 221–237 the chain is Cytoplasmic; it reads KIVSSIHSISTVQGKYK. Residues 238-261 traverse the membrane as a helical segment; that stretch reads AFSTCASHLSIVSLFYSTGLGVYV. The Extracellular portion of the chain corresponds to 262–273; that stretch reads SSAVVQSSHSAA. The helical transmembrane segment at 274 to 293 threads the bilayer; that stretch reads SASVMYTVVTPMLNPFIYSL. The Cytoplasmic portion of the chain corresponds to 294-317; sequence RNKDVKRALERLLEGNCKVHHWTG.

Belongs to the G-protein coupled receptor 1 family. In terms of tissue distribution, olfactory epithelium.

The protein localises to the cell membrane. Functionally, odorant receptor. The sequence is that of Olfactory receptor 1082 (Olr1082) from Rattus norvegicus (Rat).